Consider the following 253-residue polypeptide: Ribosomal RNA small subunit methyltransferase J (253 aa).

S-adenosyl-L-methionine-binding positions include 123–124 (ER) and Asp176.

The protein belongs to the methyltransferase superfamily. RsmJ family.

The protein resides in the cytoplasm. It carries out the reaction guanosine(1516) in 16S rRNA + S-adenosyl-L-methionine = N(2)-methylguanosine(1516) in 16S rRNA + S-adenosyl-L-homocysteine + H(+). Functionally, specifically methylates the guanosine in position 1516 of 16S rRNA. In Magnetococcus marinus (strain ATCC BAA-1437 / JCM 17883 / MC-1), this protein is Ribosomal RNA small subunit methyltransferase J.